The chain runs to 373 residues: Glutamine synthetase (373 aa).

The residue at position 2 (Ala-2) is an N-acetylalanine. Positions 2 to 25 are required for glutamine-induced ubiquitination by CRL4(CRBN) and proteasomal degradation; it reads ATSASSHLNKGIKQMYMNLPQGEK. 2 positions are modified to N6-acetyllysine: Lys-11 and Lys-14. One can recognise a GS beta-grasp domain in the interval 24-106; the sequence is EKIQLMYIWV…VFCEVFKYNR (83 aa). At Tyr-104 the chain carries Phosphotyrosine. The GS catalytic domain maps to 113–373; sequence LRHSCKRIMD…TGDEPFQYKN (261 aa). Glu-134 contributes to the ATP binding site. 4 residues coordinate Mn(2+): Glu-134, Glu-136, Glu-196, and Glu-203. 203 to 208 serves as a coordination point for ATP; sequence EFQIGP. An L-glutamate-binding site is contributed by 246-247; the sequence is NW. Position 253 (His-253) interacts with Mn(2+). Residues 255–257, Arg-319, and Arg-324 contribute to the ATP site; that span reads NFS. Arg-319 is an L-glutamate binding site. 336–338 is an ADP binding site; sequence YFE. Residue Glu-338 participates in Mn(2+) binding. Arg-340 lines the L-glutamate pocket. Residue Ser-343 is modified to Phosphoserine.

Belongs to the glutamine synthetase family. Decamer; composed of two pentamers. Interacts with PALMD. Interacts with RHOJ. Interacts with BEST2; this interaction tethers a fraction of GLUL to the membrane, causing a decrease of cytosolic glutamine synthase (GS) activity and inhibits the chloride channel activity of BEST2 by affecting the gating at the aperture in the absence of intracellular glutamate. Requires Mg(2+) as cofactor. Mn(2+) serves as cofactor. In terms of processing, palmitoylated; undergoes autopalmitoylation. Acetylated by EP300/p300; acetylation is stimulated by increased glutamine levels and promotes ubiquitin-mediated proteasomal degradation. Post-translationally, ubiquitinated by ZNRF1. Ubiquitinated by the DCX (DDB1-CUL4-X-box) E3 ubiquitin-protein ligase complex called CRL4(CRBN), leading to proteasomal degradation. In terms of tissue distribution, in the adult liver, expression is restricted to a small population of hepatocytes which form only a small rim of one to three hepatocytes around the central veins. Expressed in lung microvascular endothelial cells.

It is found in the cytoplasm. Its subcellular location is the cytosol. The protein resides in the microsome. It localises to the mitochondrion. The protein localises to the cell membrane. The catalysed reaction is L-glutamate + NH4(+) + ATP = L-glutamine + ADP + phosphate + H(+). It catalyses the reaction L-cysteinyl-[protein] + hexadecanoyl-CoA = S-hexadecanoyl-L-cysteinyl-[protein] + CoA. Its activity is regulated as follows. Glutamine synthetase activity is inhibited by methionine sulfoximine (MSO). Glutamine synthetase that catalyzes the ATP-dependent conversion of glutamate and ammonia to glutamine. Its role depends on tissue localization: in the brain, it regulates the levels of toxic ammonia and converts neurotoxic glutamate to harmless glutamine, whereas in the liver, it is one of the enzymes responsible for the removal of ammonia. Plays a key role in ammonium detoxification during erythropoiesis: the glutamine synthetase activity is required to remove ammonium generated by porphobilinogen deaminase (HMBS) during heme biosynthesis to prevent ammonium accumulation and oxidative stress. Essential for proliferation of fetal skin fibroblasts. Independently of its glutamine synthetase activity, required for endothelial cell migration during vascular development. Involved in angiogenesis by regulating membrane localization and activation of the GTPase RHOJ, possibly by promoting RHOJ palmitoylation. May act as a palmitoyltransferase for RHOJ: able to autopalmitoylate and then transfer the palmitoyl group to RHOJ. Plays a role in ribosomal 40S subunit biogenesis. Through the interaction with BEST2, inhibits BEST2 channel activity by affecting the gating at the aperture in the absence of intracellular L-glutamate, but sensitizes BEST2 to intracellular L-glutamate, which promotes the opening of BEST2 and thus relieves its inhibitory effect on BEST2. This is Glutamine synthetase from Rattus norvegicus (Rat).